Reading from the N-terminus, the 78-residue chain is Omega-conotoxin-like ArMKLT1-011 (78 aa).

The signal sequence occupies residues 1–22 (MKLTCMMIVAVLFLTAWTSVTA). Residues 23–48 (VNTRGELENLFLRASHEMNSEASKLD) constitute a propeptide that is removed on maturation. Intrachain disulfides connect Cys-52/Cys-69, Cys-59/Cys-73, and Cys-68/Cys-77.

The protein belongs to the conotoxin O1 superfamily. Expressed by the venom duct.

The protein resides in the secreted. Functionally, omega-conotoxins act at presynaptic membranes, they bind and block voltage-gated calcium channels (Cav). This is Omega-conotoxin-like ArMKLT1-011 from Conus arenatus (Sand-dusted cone).